Reading from the N-terminus, the 29-residue chain is U-homostoxin-Hdu1a (29 aa).

The O-linked (GlcNAc...) threonine glycan is linked to Thr1. 2 cysteine pairs are disulfide-bonded: Cys7-Cys19 and Cys10-Cys25.

Belongs to the sea anemone BBH family.

The protein resides in the secreted. Its subcellular location is the nematocyst. This is U-homostoxin-Hdu1a from Homostichanthus duerdeni (Sea anemone).